We begin with the raw amino-acid sequence, 283 residues long: Pantothenate synthetase (283 aa).

34 to 41 (MGALHDGH) contacts ATP. The Proton donor role is filled by histidine 41. Glutamine 65 contacts (R)-pantoate. Glutamine 65 is a binding site for beta-alanine. Residue 152 to 155 (GEKD) coordinates ATP. Position 158 (glutamine 158) interacts with (R)-pantoate. Residues valine 181 and 189 to 192 (MSSR) each bind ATP.

It belongs to the pantothenate synthetase family. In terms of assembly, homodimer.

The protein localises to the cytoplasm. It catalyses the reaction (R)-pantoate + beta-alanine + ATP = (R)-pantothenate + AMP + diphosphate + H(+). The protein operates within cofactor biosynthesis; (R)-pantothenate biosynthesis; (R)-pantothenate from (R)-pantoate and beta-alanine: step 1/1. Its function is as follows. Catalyzes the condensation of pantoate with beta-alanine in an ATP-dependent reaction via a pantoyl-adenylate intermediate. The protein is Pantothenate synthetase of Bradyrhizobium sp. (strain BTAi1 / ATCC BAA-1182).